We begin with the raw amino-acid sequence, 117 residues long: Protein Wnt-6 (117 aa).

Ser1 carries the O-palmitoleoyl serine; by PORCN lipid modification. An intrachain disulfide couples Cys83 to Cys98. Residue Asn84 is glycosylated (N-linked (GlcNAc...) asparagine).

This sequence belongs to the Wnt family. In terms of processing, palmitoleoylation is required for efficient binding to frizzled receptors. Depalmitoleoylation leads to Wnt signaling pathway inhibition.

The protein localises to the secreted. It localises to the extracellular space. The protein resides in the extracellular matrix. Its function is as follows. Ligand for members of the frizzled family of seven transmembrane receptors. Probable developmental protein. May be a signaling molecule which affects the development of discrete regions of tissues. Is likely to signal over only few cell diameters. The chain is Protein Wnt-6 (WNT-6) from Strongylocentrotus purpuratus (Purple sea urchin).